The following is a 56-amino-acid chain: Ribosome modulation factor (56 aa).

This sequence belongs to the ribosome modulation factor family.

Its subcellular location is the cytoplasm. Functionally, during stationary phase, converts 70S ribosomes to an inactive dimeric form (100S ribosomes). This chain is Ribosome modulation factor, found in Serratia proteamaculans (strain 568).